We begin with the raw amino-acid sequence, 49 residues long: MDNARIDLRSKYYVKPKADHPWLTRRTQSHQQVKPPKLPKKKPDPDKKD.

A disordered region spans residues 16 to 49 (PKADHPWLTRRTQSHQQVKPPKLPKKKPDPDKKD).

Functionally, may be involved in H(2) production during fermentative growth. This chain is Protein YdfW (ydfW), found in Escherichia coli (strain K12).